A 370-amino-acid polypeptide reads, in one-letter code: Flagellar P-ring protein (370 aa).

A signal peptide spans 1-21 (MKYILIKLSIVMIFIINSASK).

It belongs to the FlgI family. As to quaternary structure, the basal body constitutes a major portion of the flagellar organelle and consists of four rings (L,P,S, and M) mounted on a central rod.

The protein localises to the bacterial flagellum basal body. Functionally, assembles around the rod to form the L-ring and probably protects the motor/basal body from shearing forces during rotation. This Wigglesworthia glossinidia brevipalpis protein is Flagellar P-ring protein.